We begin with the raw amino-acid sequence, 247 residues long: Uroporphyrinogen-III C-methyltransferase (247 aa).

S-adenosyl-L-homocysteine is bound by residues Pro-12, 117-118, Met-168, Ala-197, and Ala-225; that span reads TA.

This sequence belongs to the precorrin methyltransferase family.

The enzyme catalyses uroporphyrinogen III + 2 S-adenosyl-L-methionine = precorrin-2 + 2 S-adenosyl-L-homocysteine + H(+). It participates in cofactor biosynthesis; adenosylcobalamin biosynthesis; precorrin-2 from uroporphyrinogen III: step 1/1. The protein operates within porphyrin-containing compound metabolism; siroheme biosynthesis; precorrin-2 from uroporphyrinogen III: step 1/1. Functionally, catalyzes the two successive C-2 and C-7 methylation reactions involved in the conversion of uroporphyrinogen III to precorrin-2 via the intermediate formation of precorrin-1. It is a step in the biosynthesis of both cobalamin (vitamin B12) and siroheme. In Pseudomonas fluorescens, this protein is Uroporphyrinogen-III C-methyltransferase.